Consider the following 114-residue polypeptide: MALGWYELKLAKDGQFMFNLKAANSQVILTSELYRSRSAAENGIASVQKNGLDEKNFEVRVAKNDKPYFVLKAKNHQEIGRSQYYSSSVSAKKGIVSVTKNAASTVIKDLTNEA.

A run of 2 repeats spans residues 11-59 and 62-110.

The protein belongs to the UPF0339 family. Duplicated subfamily.

This chain is UPF0339 protein PM0519, found in Pasteurella multocida (strain Pm70).